Consider the following 270-residue polypeptide: 3-phenylpropionate-dihydrodiol/cinnamic acid-dihydrodiol dehydrogenase (270 aa).

An NAD(+)-binding site is contributed by 10-34; the sequence is FITGGGSGLGLALVERFIEEGAQVA. Serine 143 provides a ligand contact to substrate. The Proton acceptor role is filled by tyrosine 156.

It belongs to the short-chain dehydrogenases/reductases (SDR) family.

The enzyme catalyses 3-(cis-5,6-dihydroxycyclohexa-1,3-dien-1-yl)propanoate + NAD(+) = 3-(2,3-dihydroxyphenyl)propanoate + NADH + H(+). It catalyses the reaction (2E)-3-(cis-5,6-dihydroxycyclohexa-1,3-dien-1-yl)prop-2-enoate + NAD(+) = (2E)-3-(2,3-dihydroxyphenyl)prop-2-enoate + NADH + H(+). Its pathway is aromatic compound metabolism; 3-phenylpropanoate degradation. In terms of biological role, converts 3-phenylpropionate-dihydrodiol (PP-dihydrodiol) and cinnamic acid-dihydrodiol (CI-dihydrodiol) into 3-(2,3-dihydroxylphenyl)propanoic acid (DHPP) and 2,3-dihydroxicinnamic acid (DHCI), respectively. The chain is 3-phenylpropionate-dihydrodiol/cinnamic acid-dihydrodiol dehydrogenase from Escherichia coli O7:K1 (strain IAI39 / ExPEC).